We begin with the raw amino-acid sequence, 192 residues long: Superoxide dismutase [Fe] (192 aa).

The Fe cation site is built by His-27, His-74, Asp-157, and His-161.

This sequence belongs to the iron/manganese superoxide dismutase family. Homodimer. Fe cation serves as cofactor.

It catalyses the reaction 2 superoxide + 2 H(+) = H2O2 + O2. Its function is as follows. Destroys superoxide anion radicals which are normally produced within the cells and which are toxic to biological systems. The sequence is that of Superoxide dismutase [Fe] (sodB) from Legionella pneumophila subsp. pneumophila (strain Philadelphia 1 / ATCC 33152 / DSM 7513).